Here is a 365-residue protein sequence, read N- to C-terminus: Phosphatidylcholine:ceramide cholinephosphotransferase 2 (365 aa).

Positions 9–50 are disordered; the sequence is LEGHLESQTNNSTNTYTSPTEAVEEEDKNGKGKPKTLSNGLR. Low complexity predominate over residues 15-28; the sequence is SQTNNSTNTYTSPT. The next 5 helical transmembrane spans lie at 80 to 100, 128 to 148, 159 to 179, 219 to 239, and 248 to 268; these read GIAFVYALFNLILTTVMITVV, FSVSEINGMVLVGLWLTQWLF, FFFIMGTLYLYRCITMYVTTL, ILCGDFLFSGHTVVLTLTYLF, and FWWYHLVCWLLSAAGIICILV. His229 is a catalytic residue. Residues His272 and Asp276 contribute to the active site. Residues 273–290 form a helical membrane-spanning segment; sequence YTVDVIIAYYITTRLFWW. The Cytoplasmic segment spans residues 291–365; that stretch reads YHSMANEKNL…KIGEDNEKST (75 aa). 4 S-palmitoyl cysteine lipidation sites follow: Cys331, Cys332, Cys343, and Cys348.

It belongs to the sphingomyelin synthase family. In terms of processing, palmitoylated on Cys-331, Cys-332, Cys-343 and Cys-348; which plays an important role in plasma membrane localization. As to expression, expression restricted to late round spermatids and elongating spermatids but not detected in late elongate spermatids and Sertoli cells (at protein level).

Its subcellular location is the cell membrane. It is found in the golgi apparatus membrane. The enzyme catalyses an N-acylsphing-4-enine + a 1,2-diacyl-sn-glycero-3-phosphocholine = a sphingomyelin + a 1,2-diacyl-sn-glycerol. It carries out the reaction an N-acylsphinganine + a 1,2-diacyl-sn-glycero-3-phosphocholine = an N-acylsphinganine-1-phosphocholine + a 1,2-diacyl-sn-glycerol. The catalysed reaction is an N-acyl-(4R)-4-hydroxysphinganine + a 1,2-diacyl-sn-glycero-3-phosphocholine = an N-acyl-(4R)-4-hydroxysphinganine-phosphocholine + a 1,2-diacyl-sn-glycerol. It catalyses the reaction an N-acylsphing-4-enine + a 1,2-diacyl-sn-glycero-3-phosphoethanolamine = an N-acylsphing-4-enine 1-phosphoethanolamine + a 1,2-diacyl-sn-glycerol. The enzyme catalyses an N-acylsphinganine + a 1,2-diacyl-sn-glycero-3-phosphoethanolamine = an N-acylsphinganine-1-phosphoethanolamine + a 1,2-diacyl-sn-glycerol. It carries out the reaction an N-acyl-(4R)-4-hydroxysphinganine + a 1,2-diacyl-sn-glycero-3-phosphoethanolamine = an N-acyl-(4R)-4-hydroxysphinganine-1-phosphoethanolamine + a 1,2-diacyl-sn-glycerol. The catalysed reaction is 1,2-dihexadecanoyl-sn-glycero-3-phosphocholine + an N-acylsphing-4-enine = 1,2-dihexadecanoyl-sn-glycerol + a sphingomyelin. It catalyses the reaction 1-(9Z-octadecenoyl)-2-acyl-sn-3-glycerol + a sphingomyelin = a 1-(9Z-octadecenoyl)-2-acyl-sn-glycero-3-phosphocholine + an N-acylsphing-4-enine. The enzyme catalyses N-hexadecanoylsphinganine + a 1,2-diacyl-sn-glycero-3-phosphocholine = N-hexadecanoyl-sphinganine-1-phosphocholine + a 1,2-diacyl-sn-glycerol. It carries out the reaction N-hexadecanoyl-(4R)-hydroxysphinganine + a 1,2-diacyl-sn-glycero-3-phosphocholine = N-hexadecanoyl-(4R)-hydroxysphinganine-phosphocholine + a 1,2-diacyl-sn-glycerol. The catalysed reaction is N-hexadecanoylsphinganine + a 1,2-diacyl-sn-glycero-3-phosphoethanolamine = N-hexadecanoyl-sphinganine-1-phosphoethanolamine + a 1,2-diacyl-sn-glycerol. It catalyses the reaction N-hexadecanoyl-(4R)-hydroxysphinganine + a 1,2-diacyl-sn-glycero-3-phosphoethanolamine = N-hexadecanoyl-(4R)-hydroxysphinganine-1-phosphoethanolamine + a 1,2-diacyl-sn-glycerol. The protein operates within sphingolipid metabolism. Sphingomyelin synthase that primarily contributes to sphingomyelin synthesis and homeostasis at the plasma membrane. Catalyzes the reversible transfer of phosphocholine moiety in sphingomyelin biosynthesis: in the forward reaction transfers phosphocholine head group of phosphatidylcholine (PC) on to ceramide (CER) to form ceramide phosphocholine (sphingomyelin, SM) and diacylglycerol (DAG) as by-product, and in the reverse reaction transfers phosphocholine from SM to DAG to form PC and CER. The direction of the reaction appears to depend on the levels of CER and DAG in the plasma membrane. Does not use free phosphorylcholine or CDP-choline as donors. Can also transfer phosphoethanolamine head group of phosphatidylethanolamine (PE) on to ceramide (CER) to form ceramide phosphoethanolamine (CPE). Regulates receptor-mediated signal transduction via mitogenic DAG and proapoptotic CER, as well as via SM, a structural component of membrane rafts that serve as platforms for signal transduction and protein sorting. To a lesser extent, plays a role in secretory transport via regulation of DAG pool at the Golgi apparatus and its downstream effects on PRKD1. Required for normal bone matrix mineralization. The chain is Phosphatidylcholine:ceramide cholinephosphotransferase 2 (Sgms2) from Rattus norvegicus (Rat).